The sequence spans 820 residues: Pentatricopeptide repeat-containing protein At3g22150, chloroplastic (820 aa).

The tract at residues 1–42 (MAGSALPLPPPPPLSLQSPSQNQTRHSSTFSPPTLTPQTPSI) is disordered. The N-terminal 50 residues, 1–50 (MAGSALPLPPPPPLSLQSPSQNQTRHSSTFSPPTLTPQTPSIRSRLSKIC), are a transit peptide targeting the chloroplast. A compositionally biased stretch (polar residues) spans 22–42 (NQTRHSSTFSPPTLTPQTPSI). PPR repeat units lie at residues 69–99 (TTVLWNTIIIGFICNNLPHEALLFYSRMKKT), 106–136 (DAYTYSSTLKACAETKNLKAGKAVHCHLIRC), 141–177 (SRVVHNSLMNMYVSCLNAPDCFEYDVVRKVFDNMRRK), 178–212 (NVVAWNTLISWYVKTGRNAEACRQFGIMMRMEVKP), 213–247 (SPVSFVNVFPAVSISRSIKKANVFYGLMLKLGDEY), 250–284 (DLFVVSSAISMYAELGDIESSRRVFDSCVERNIEV), 285–316 (WNTMIGVYVQNDCLVESIELFLEAIGSKEIVS), 317–347 (DEVTYLLAASAVSALQQVELGRQFHGFVSKN), 352–382 (PIVIVNSLMVMYSRCGSVHKSFGVFLSMRER), 383–417 (DVVSWNTMISAFVQNGLDDEGLMLVYEMQKQGFKI), 418–452 (DYITVTALLSAASNLRNKEIGKQTHAFLIRQGIQF), 485–519 (DQATWNSMISGYTQNGHTEKTFLVFRKMLEQNIRP), 520–550 (NAVTVASILPACSQIGSVDLGKQLHGFSIRQ), 555–585 (NVFVASALVDMYSKAGAIKYAEDMFSQTKER), 586–620 (NSVTYTTMILGYGQHGMGERAISLFLSMQESGIKP), 621–651 (DAITFVAVLSACSYSGLIDEGLKIFEEMREV), and 657–691 (SSEHYCCITDMLGRVGRVNEAYEFVKGLGEEGNIA). The interval 693-770 (LWGSLLGSCK…EVGRSGIEIA (78 aa)) is type E motif. Residues 771–801 (GYVNCFVSRDQEHPHSSEIYDVIDGLAKDMR) are type E(+) motif.

This sequence belongs to the PPR family. PCMP-E subfamily.

It localises to the plastid. The protein resides in the chloroplast. The chain is Pentatricopeptide repeat-containing protein At3g22150, chloroplastic (PCMP-E95) from Arabidopsis thaliana (Mouse-ear cress).